The primary structure comprises 296 residues: Nucleotide-binding protein RSc0403 (296 aa).

Residue 8–15 (GMSGSGKS) participates in ATP binding. Residue 57 to 60 (DIRS) participates in GTP binding. The interval 99–124 (TRRRHPLSIRNGRPDAGNPPSAAKGP) is disordered.

Belongs to the RapZ-like family.

Functionally, displays ATPase and GTPase activities. This is Nucleotide-binding protein RSc0403 from Ralstonia nicotianae (strain ATCC BAA-1114 / GMI1000) (Ralstonia solanacearum).